A 344-amino-acid polypeptide reads, in one-letter code: GDSL esterase/lipase At1g73610 (344 aa).

A signal peptide spans 1 to 24 (MNCLMFFKMLLAFSFISLFYVGNA). N30 carries N-linked (GlcNAc...) asparagine glycosylation. S42 (nucleophile) is an active-site residue. Catalysis depends on residues D319 and H322.

The protein belongs to the 'GDSL' lipolytic enzyme family.

Its subcellular location is the secreted. The sequence is that of GDSL esterase/lipase At1g73610 from Arabidopsis thaliana (Mouse-ear cress).